Reading from the N-terminus, the 125-residue chain is Insulin growth factor-like family member 3 (125 aa).

Positions 1 to 24 (MRPRCCILALVCWITVFLLQCSKG) are cleaved as a signal peptide.

It belongs to the IGFL family. Detected in the cerebellum.

The protein localises to the secreted. Its function is as follows. Potential ligand of the IGFLR1 cell membrane receptor. The sequence is that of Insulin growth factor-like family member 3 (IGFL3) from Homo sapiens (Human).